The chain runs to 129 residues: Large ribosomal subunit protein bL12 (129 aa).

Belongs to the bacterial ribosomal protein bL12 family. In terms of assembly, homodimer. Part of the ribosomal stalk of the 50S ribosomal subunit. Forms a multimeric L10(L12)X complex, where L10 forms an elongated spine to which 2 to 4 L12 dimers bind in a sequential fashion. Binds GTP-bound translation factors.

In terms of biological role, forms part of the ribosomal stalk which helps the ribosome interact with GTP-bound translation factors. Is thus essential for accurate translation. In Treponema denticola (strain ATCC 35405 / DSM 14222 / CIP 103919 / JCM 8153 / KCTC 15104), this protein is Large ribosomal subunit protein bL12.